The primary structure comprises 358 residues: S-adenosylmethionine:tRNA ribosyltransferase-isomerase (358 aa).

The protein belongs to the QueA family. In terms of assembly, monomer.

The protein resides in the cytoplasm. The catalysed reaction is 7-aminomethyl-7-carbaguanosine(34) in tRNA + S-adenosyl-L-methionine = epoxyqueuosine(34) in tRNA + adenine + L-methionine + 2 H(+). Its pathway is tRNA modification; tRNA-queuosine biosynthesis. In terms of biological role, transfers and isomerizes the ribose moiety from AdoMet to the 7-aminomethyl group of 7-deazaguanine (preQ1-tRNA) to give epoxyqueuosine (oQ-tRNA). The protein is S-adenosylmethionine:tRNA ribosyltransferase-isomerase of Chelativorans sp. (strain BNC1).